The chain runs to 430 residues: Enolase (430 aa).

Residue Gln163 participates in (2R)-2-phosphoglycerate binding. Catalysis depends on Glu205, which acts as the Proton donor. Positions 242, 287, and 314 each coordinate Mg(2+). 4 residues coordinate (2R)-2-phosphoglycerate: Lys339, Arg368, Ser369, and Lys390. The active-site Proton acceptor is Lys339.

The protein belongs to the enolase family. Requires Mg(2+) as cofactor.

Its subcellular location is the cytoplasm. The protein resides in the secreted. It is found in the cell surface. The catalysed reaction is (2R)-2-phosphoglycerate = phosphoenolpyruvate + H2O. The protein operates within carbohydrate degradation; glycolysis; pyruvate from D-glyceraldehyde 3-phosphate: step 4/5. In terms of biological role, catalyzes the reversible conversion of 2-phosphoglycerate (2-PG) into phosphoenolpyruvate (PEP). It is essential for the degradation of carbohydrates via glycolysis. The protein is Enolase of Bacillus velezensis (strain DSM 23117 / BGSC 10A6 / LMG 26770 / FZB42) (Bacillus amyloliquefaciens subsp. plantarum).